Here is a 492-residue protein sequence, read N- to C-terminus: Alpha-2-antiplasmin (492 aa).

The signal sequence occupies residues 1 to 22 (MALLWGLLALILSCLSSLCSAQ). The propeptide occupies 23–40 (FSPVSTMEPLDLQLMDGQ). The disordered stretch occupies residues 56-76 (QEPGGQIAPKKAPEDCKLSPT). A disulfide bridge connects residues C71 and C144. N127, N249, N296, N310, and N317 each carry an N-linked (GlcNAc...) asparagine glycan. Residues 433–492 (SVRNPNPGAQPERKEQQDSPDGKDSFQDHKGLPRGDKPFDPDLKLGPPSEEDYAQPSSPK) form a disordered region. Basic and acidic residues predominate over residues 443–475 (PERKEQQDSPDGKDSFQDHKGLPRGDKPFDPDL). The residue at position 485 (Y485) is a Sulfotyrosine.

Belongs to the serpin family. Forms protease inhibiting heterodimer with TMPRSS7. Post-translationally, proteolytically cleaved at Pro-31 by both the prolyl endopeptidase FAP form and antiplasmin-cleaving enzyme FAP soluble form to generate mature alpha-2-antiplasmin. Expressed by the liver and secreted in plasma.

It is found in the secreted. Serine protease inhibitor. The major targets of this inhibitor are plasmin and trypsin, but it also inactivates matriptase-3/TMPRSS7 and chymotrypsin. The protein is Alpha-2-antiplasmin (SERPINF2) of Bos taurus (Bovine).